A 371-amino-acid chain; its full sequence is Aspartate-semialdehyde dehydrogenase (371 aa).

NADP(+)-binding positions include 9-12 (RGMV), 37-38 (TS), and Gln-73. Arg-102 lines the phosphate pocket. Catalysis depends on Cys-135, which acts as the Acyl-thioester intermediate. Gln-162 contacts substrate. Residues 165–166 (SG) and Pro-193 contribute to the NADP(+) site. Substrate is bound at residue Glu-241. Lys-244 is a phosphate binding site. Arg-268 is a substrate binding site. His-275 acts as the Proton acceptor in catalysis. An NADP(+)-binding site is contributed by Gln-351.

It belongs to the aspartate-semialdehyde dehydrogenase family. In terms of assembly, homodimer.

It carries out the reaction L-aspartate 4-semialdehyde + phosphate + NADP(+) = 4-phospho-L-aspartate + NADPH + H(+). It participates in amino-acid biosynthesis; L-lysine biosynthesis via DAP pathway; (S)-tetrahydrodipicolinate from L-aspartate: step 2/4. The protein operates within amino-acid biosynthesis; L-methionine biosynthesis via de novo pathway; L-homoserine from L-aspartate: step 2/3. Its pathway is amino-acid biosynthesis; L-threonine biosynthesis; L-threonine from L-aspartate: step 2/5. In terms of biological role, catalyzes the NADPH-dependent formation of L-aspartate-semialdehyde (L-ASA) by the reductive dephosphorylation of L-aspartyl-4-phosphate. This Neisseria meningitidis serogroup B (strain ATCC BAA-335 / MC58) protein is Aspartate-semialdehyde dehydrogenase.